The chain runs to 617 residues: Dihydroxy-acid dehydratase (617 aa).

Position 81 (aspartate 81) interacts with Mg(2+). Position 122 (cysteine 122) interacts with [2Fe-2S] cluster. Residues aspartate 123 and lysine 124 each coordinate Mg(2+). N6-carboxylysine is present on lysine 124. Cysteine 197 is a binding site for [2Fe-2S] cluster. Glutamate 494 is a binding site for Mg(2+). The active-site Proton acceptor is the serine 520.

The protein belongs to the IlvD/Edd family. Homodimer. It depends on [2Fe-2S] cluster as a cofactor. Mg(2+) is required as a cofactor.

The enzyme catalyses (2R)-2,3-dihydroxy-3-methylbutanoate = 3-methyl-2-oxobutanoate + H2O. It carries out the reaction (2R,3R)-2,3-dihydroxy-3-methylpentanoate = (S)-3-methyl-2-oxopentanoate + H2O. It participates in amino-acid biosynthesis; L-isoleucine biosynthesis; L-isoleucine from 2-oxobutanoate: step 3/4. Its pathway is amino-acid biosynthesis; L-valine biosynthesis; L-valine from pyruvate: step 3/4. In terms of biological role, functions in the biosynthesis of branched-chain amino acids. Catalyzes the dehydration of (2R,3R)-2,3-dihydroxy-3-methylpentanoate (2,3-dihydroxy-3-methylvalerate) into 2-oxo-3-methylpentanoate (2-oxo-3-methylvalerate) and of (2R)-2,3-dihydroxy-3-methylbutanoate (2,3-dihydroxyisovalerate) into 2-oxo-3-methylbutanoate (2-oxoisovalerate), the penultimate precursor to L-isoleucine and L-valine, respectively. This Frankia casuarinae (strain DSM 45818 / CECT 9043 / HFP020203 / CcI3) protein is Dihydroxy-acid dehydratase.